The primary structure comprises 346 residues: Haptoglobin (346 aa).

The signal sequence occupies residues 1–18 (MRALGAVVTLLLWGQLFA). The Sushi domain occupies 31-87 (DSCPKPPEIENGYVEHLVRYRCQHYRLRTEGDGVYTLNSEKQWVNTAAGERLPECEA). 4 disulfide bridges follow: Cys-52-Cys-85, Cys-89-Cys-206, Cys-249-Cys-280, and Cys-291-Cys-321. Residues 102–344 (IIGGSLDAKG…FLDWIQETMA (243 aa)) enclose the Peptidase S1 domain. N-linked (GlcNAc...) asparagine glycosylation is found at Asn-147 and Asn-181. An interaction with CD163 region spans residues 258–263 (VPEKEG).

This sequence belongs to the peptidase S1 family. Tetramer of two alpha and two beta chains; disulfide-linked. The hemoglobin/haptoglobin complex is composed of a haptoglobin dimer bound to two hemoglobin alpha-beta dimers. Interacts with CD163. Interacts with ERGIC3. Expressed by the liver and secreted in plasma.

It localises to the secreted. In terms of biological role, as a result of hemolysis, hemoglobin is found to accumulate in the kidney and is secreted in the urine. Haptoglobin captures, and combines with free plasma hemoglobin to allow hepatic recycling of heme iron and to prevent kidney damage. Haptoglobin also acts as an antioxidant, has antibacterial activity and plays a role in modulating many aspects of the acute phase response. Hemoglobin/haptoglobin complexes are rapidly cleared by the macrophage CD163 scavenger receptor expressed on the surface of liver Kupfer cells through an endocytic lysosomal degradation pathway. The protein is Haptoglobin (HP) of Mesocricetus auratus (Golden hamster).